The following is a 681-amino-acid chain: Probable glutamate carboxypeptidase LAMP1 (681 aa).

The Cytoplasmic segment spans residues methionine 1–serine 6. A helical; Signal-anchor for type II membrane protein membrane pass occupies residues leucine 7 to serine 24. Topologically, residues proline 25–isoleucine 681 are extracellular. Residues asparagine 42, asparagine 140, asparagine 166, and asparagine 299 are each glycosylated (N-linked (GlcNAc...) asparagine). Positions serine 241–leucine 527 are catalytic. Residues histidine 333 and aspartate 343 each contribute to the Zn(2+) site. Glutamate 380 functions as the Nucleophile in the catalytic mechanism. Zn(2+) contacts are provided by glutamate 381 and aspartate 409. N-linked (GlcNAc...) asparagine glycosylation occurs at asparagine 441. Histidine 493 contacts Zn(2+). N-linked (GlcNAc...) asparagine glycosylation occurs at asparagine 536.

Belongs to the peptidase M28 family. M28B subfamily. Zn(2+) is required as a cofactor.

It localises to the endoplasmic reticulum membrane. The catalysed reaction is Release of an unsubstituted, C-terminal glutamyl residue, typically from Ac-Asp-Glu or folylpoly-gamma-glutamates.. Acts in association with AMP1 to suppress ectopic stem cell niche formation in the shoot apical meristem (SAM) independently of cytokinin signaling pathway. In Arabidopsis thaliana (Mouse-ear cress), this protein is Probable glutamate carboxypeptidase LAMP1.